Here is a 402-residue protein sequence, read N- to C-terminus: uncharacterized protein (402 aa).

Helical transmembrane passes span 12-32 (FWLITGIIFIAFNLRPAITSV), 48-68 (GAAGFLTALPLLSFAVLSPLA), 80-100 (TLWLGLVILLIGVLTRSTGYT), 101-121 (AALFFGTALIGVGIAIGNVLL), 134-154 (GIMISLYTTSMNIFAALASGV), 168-188 (QAFLLWGGLALLALLIWIPQL), 212-232 (WYVTIFMGLQSFLFYSSIAWF), 248-268 (WMVSLMQFASLPSTFLTPVLA), 291-311 (GLLAGGSHTLLAIWMIIIGIG), 339-359 (MSQSFGYLLAAVGPIFVGYLF), and 367-387 (MPIVLLIAALIVMGAAGQGAG).

It belongs to the major facilitator superfamily. Cyanate porter (TC 2.A.1.17) family.

The protein resides in the cell membrane. This is an uncharacterized protein from Bacillus subtilis (strain 168).